A 223-amino-acid chain; its full sequence is Protein-lysine N-methyltransferase CG9154 (223 aa).

The protein belongs to the class I-like SAM-binding methyltransferase superfamily. EFM5 family.

The protein resides in the cytoplasm. In terms of biological role, S-adenosyl-L-methionine-dependent protein-lysine N-methyltransferase that methylates elongation factor 1-alpha. The chain is Protein-lysine N-methyltransferase CG9154 from Drosophila melanogaster (Fruit fly).